The primary structure comprises 204 residues: Protein GrpE (204 aa).

Basic and acidic residues-rich tracts occupy residues 1–21 (MEEL…EVKG) and 36–46 (EEKIETEVEQK). The tract at residues 1–46 (MEELEKDKIERNEEMSEEVKGEGPPSELEQSEEVVEEKIETEVEQK) is disordered.

It belongs to the GrpE family. As to quaternary structure, homodimer.

It is found in the cytoplasm. In terms of biological role, participates actively in the response to hyperosmotic and heat shock by preventing the aggregation of stress-denatured proteins, in association with DnaK and GrpE. It is the nucleotide exchange factor for DnaK and may function as a thermosensor. Unfolded proteins bind initially to DnaJ; upon interaction with the DnaJ-bound protein, DnaK hydrolyzes its bound ATP, resulting in the formation of a stable complex. GrpE releases ADP from DnaK; ATP binding to DnaK triggers the release of the substrate protein, thus completing the reaction cycle. Several rounds of ATP-dependent interactions between DnaJ, DnaK and GrpE are required for fully efficient folding. The chain is Protein GrpE from Caldanaerobacter subterraneus subsp. tengcongensis (strain DSM 15242 / JCM 11007 / NBRC 100824 / MB4) (Thermoanaerobacter tengcongensis).